The primary structure comprises 156 residues: Probable inactive ribonuclease-like protein 13 (156 aa).

A signal peptide spans Met1–Val20. Asn126 carries N-linked (GlcNAc...) asparagine glycosylation.

This sequence belongs to the pancreatic ribonuclease family.

Its subcellular location is the secreted. Does not exhibit any ribonuclease activity. The sequence is that of Probable inactive ribonuclease-like protein 13 (RNASE13) from Homo sapiens (Human).